The following is a 1002-amino-acid chain: Leucine-rich repeat receptor-like serine/threonine-protein kinase BAM2 (1002 aa).

A signal peptide spans Met1–Ala22. At Lys23 to Thr636 the chain is on the extracellular side. Asn51, Asn80, Asn97, Asn123, Asn130, Asn153, and Asn164 each carry an N-linked (GlcNAc...) asparagine glycan. LRR repeat units follow at residues Leu68–Leu92, Pro93–Leu116, Glu118–Gly140, Leu141–Leu165, Gln167–Thr188, Trp189–Leu213, Thr215–Leu238, Ser239–Leu262, Gln263–Leu285, Ile286–Gln309, Lys311–Met334, Pro335–Asn358, Gly359–Gly382, Arg384–Cys406, Glu407–Leu430, Pro431–Gly456, Leu458–Leu479, Ser480–Leu503, Gln505–Cys527, Lys528–Met551, Lys552–Met575, and Ser577–Tyr600. N-linked (GlcNAc...) asparagine glycans are attached at residues Asn212 and Asn237. 2 N-linked (GlcNAc...) asparagine glycosylation sites follow: Asn312 and Asn346. Asn420 carries an N-linked (GlcNAc...) asparagine glycan. Asn478 carries an N-linked (GlcNAc...) asparagine glycan. Residues Asn558, Asn587, and Asn602 are each glycosylated (N-linked (GlcNAc...) asparagine). The chain crosses the membrane as a helical span at residues Lys637–Ile657. Over Lys658–Asn1002 the chain is Cytoplasmic. Phosphothreonine is present on Thr682. Residues Leu690–Ile967 form the Protein kinase domain. ATP is bound by residues Ile696–Val704 and Lys718. A phosphotyrosine mark is found at Tyr765 and Tyr803. Catalysis depends on Asp816, which acts as the Proton acceptor. Position 851 is a phosphoserine (Ser851). 2 positions are modified to phosphotyrosine: Tyr859 and Tyr866. A Phosphothreonine modification is found at Thr867. The segment at Leu969–Asn1002 is disordered. Positions Ser989–Asn1002 are enriched in low complexity.

This sequence belongs to the protein kinase superfamily. Ser/Thr protein kinase family. As to quaternary structure, interacts with BAM1 and CLV1. Binds to the CLV3, CLE11, CLE18, CLE19, CLE22, CLE25, CLE26, CLE40, CLE41 and CLE42 mature peptides, probably via its extracellular leucine-rich repeat region. As to expression, expressed in seedlings, roots, rosette leaves, stems, inflorescences, flowers and siliques.

It localises to the cell membrane. It catalyses the reaction L-seryl-[protein] + ATP = O-phospho-L-seryl-[protein] + ADP + H(+). It carries out the reaction L-threonyl-[protein] + ATP = O-phospho-L-threonyl-[protein] + ADP + H(+). In terms of biological role, necessary for male gametophyte development, as well as ovule specification and function. Involved in cell-cell communication process required during early anther development, and regulating cell division and differentiation to organize cell layers. Required for the development of high-ordered vascular strands within the leaf and a correlated control of leaf shape, size and symmetry. May regulate the CLV1-dependent CLV3-mediated signaling in meristems maintenance. This is Leucine-rich repeat receptor-like serine/threonine-protein kinase BAM2 (BAM2) from Arabidopsis thaliana (Mouse-ear cress).